Here is a 299-residue protein sequence, read N- to C-terminus: Nucleotide-binding protein DIP1313 (299 aa).

Residue 22 to 29 participates in ATP binding; it reads GLSGAGLS. 73–76 provides a ligand contact to GTP; it reads DVRS.

It belongs to the RapZ-like family.

Its function is as follows. Displays ATPase and GTPase activities. The sequence is that of Nucleotide-binding protein DIP1313 from Corynebacterium diphtheriae (strain ATCC 700971 / NCTC 13129 / Biotype gravis).